We begin with the raw amino-acid sequence, 107 residues long: Acidic phospholipase A2 braziliase-I (107 aa).

Disulfide bonds link cysteine 26–cysteine 100, cysteine 28–cysteine 44, cysteine 43–cysteine 86, cysteine 49–cysteine 107, cysteine 50–cysteine 79, cysteine 57–cysteine 72, and cysteine 66–cysteine 77. Ca(2+)-binding residues include tyrosine 27, glycine 29, and glycine 31. Histidine 47 is a catalytic residue. Aspartate 48 contributes to the Ca(2+) binding site. The active site involves aspartate 80.

Monomer. The cofactor is Ca(2+). As to expression, expressed by the venom gland.

It localises to the secreted. The enzyme catalyses a 1,2-diacyl-sn-glycero-3-phosphocholine + H2O = a 1-acyl-sn-glycero-3-phosphocholine + a fatty acid + H(+). In terms of biological role, snake venom phospholipase A2 (PLA2) that induces significant edematogenic activity. Shows mild cytotoxicity on Trypanosoma cruzi and Leishmania infantum. Also inhibits ADP- and collagen-induced platelet aggregation. Does not show myotoxic activity. The polypeptide is Acidic phospholipase A2 braziliase-I (Bothrops brazili (Brazil's lancehead)).